The chain runs to 556 residues: Formate--tetrahydrofolate ligase (556 aa).

Residue 65–72 (TPAGEGKT) participates in ATP binding.

It belongs to the formate--tetrahydrofolate ligase family.

The catalysed reaction is (6S)-5,6,7,8-tetrahydrofolate + formate + ATP = (6R)-10-formyltetrahydrofolate + ADP + phosphate. It participates in one-carbon metabolism; tetrahydrofolate interconversion. The polypeptide is Formate--tetrahydrofolate ligase (Clostridium acidurici (Gottschalkia acidurici)).